The primary structure comprises 137 residues: Large ribosomal subunit protein uL16 (137 aa).

This sequence belongs to the universal ribosomal protein uL16 family. In terms of assembly, part of the 50S ribosomal subunit.

In terms of biological role, binds 23S rRNA and is also seen to make contacts with the A and possibly P site tRNAs. The chain is Large ribosomal subunit protein uL16 from Streptococcus mutans serotype c (strain ATCC 700610 / UA159).